A 622-amino-acid chain; its full sequence is DNA-directed RNA polymerase subunit gamma (622 aa).

Positions 70, 72, 85, and 88 each coordinate Zn(2+). Mg(2+) is bound by residues Asp466, Asp468, and Asp470.

This sequence belongs to the RNA polymerase beta' chain family. RpoC1 subfamily. In terms of assembly, in cyanobacteria the RNAP catalytic core is composed of 2 alpha, 1 beta, 1 beta', 1 gamma and 1 omega subunit. When a sigma factor is associated with the core the holoenzyme is formed, which can initiate transcription. The cofactor is Mg(2+). Requires Zn(2+) as cofactor.

The catalysed reaction is RNA(n) + a ribonucleoside 5'-triphosphate = RNA(n+1) + diphosphate. Its function is as follows. DNA-dependent RNA polymerase catalyzes the transcription of DNA into RNA using the four ribonucleoside triphosphates as substrates. This chain is DNA-directed RNA polymerase subunit gamma, found in Cyanothece sp. (strain PCC 7425 / ATCC 29141).